The sequence spans 276 residues: Protein canopy homolog 3 (276 aa).

Positions Met-1–Pro-26 are cleaved as a signal peptide. Residues Ser-47 to Pro-269 form the Saposin B-type domain. Intrachain disulfides connect Cys-49/Cys-206, Cys-52/Cys-194, and Cys-104/Cys-166. Asn-153 carries N-linked (GlcNAc...) asparagine glycosylation. Residues Asn-153 to Asp-179 adopt a coiled-coil conformation. Residues Ile-218–Leu-276 form a disordered region.

The protein belongs to the canopy family. As to quaternary structure, interacts with HSP90B1; this interaction is disrupted in the presence of ATP. Interacts with TLR1, TLR2, TLR4 and TLR9. Strongest interaction with TLR4.

It localises to the endoplasmic reticulum. Functionally, toll-like receptor (TLR)-specific co-chaperone for HSP90B1. Required for proper TLR folding, except that of TLR3, and hence controls TLR exit from the endoplasmic reticulum. Consequently, required for both innate and adaptive immune responses. In Mus musculus (Mouse), this protein is Protein canopy homolog 3 (Cnpy3).